An 86-amino-acid chain; its full sequence is Putative antitoxin VapB5 (86 aa).

This sequence belongs to the phD/YefM antitoxin family. In terms of assembly, forms a complex with VapC5.

Probable antitoxin component of a probable type II toxin-antitoxin (TA) system. The cognate toxin is VapC5. In Mycobacterium tuberculosis (strain CDC 1551 / Oshkosh), this protein is Putative antitoxin VapB5 (vapB5).